A 574-amino-acid chain; its full sequence is NADH-ubiquinone oxidoreductase chain 5 (574 aa).

16 helical membrane-spanning segments follow: residues 10–30 (VASK…LYMV), 50–70 (MMMT…VVMI), 87–107 (FINR…MLIF), 111–131 (LIIL…LVIY), 141–161 (GMIT…AIAW), 181–203 (YQAL…SSWL), 211–231 (TPVS…FLLI), 240–260 (VWWF…MAGL), 280–300 (LGMM…FHMV), 301–321 (THAM…HSHM), 340–360 (TSCL…SGFY), 381–401 (LILF…MCVV), 423–443 (MLLL…ILPL), 458–478 (TLML…TTNM), 489–509 (IINY…QFMM), and 554–574 (TPMN…LVAI).

The protein belongs to the complex I subunit 5 family.

The protein localises to the mitochondrion inner membrane. The enzyme catalyses a ubiquinone + NADH + 5 H(+)(in) = a ubiquinol + NAD(+) + 4 H(+)(out). Core subunit of the mitochondrial membrane respiratory chain NADH dehydrogenase (Complex I) that is believed to belong to the minimal assembly required for catalysis. Complex I functions in the transfer of electrons from NADH to the respiratory chain. The immediate electron acceptor for the enzyme is believed to be ubiquinone. The polypeptide is NADH-ubiquinone oxidoreductase chain 5 (ND5) (Lumbricus terrestris (Common earthworm)).